The chain runs to 335 residues: 4-hydroxy-3-methylbut-2-enyl diphosphate reductase (335 aa).

A [4Fe-4S] cluster-binding site is contributed by C21. (2E)-4-hydroxy-3-methylbut-2-enyl diphosphate contacts are provided by H50 and H86. Residues H50 and H86 each contribute to the dimethylallyl diphosphate site. Residues H50 and H86 each coordinate isopentenyl diphosphate. C108 lines the [4Fe-4S] cluster pocket. H136 provides a ligand contact to (2E)-4-hydroxy-3-methylbut-2-enyl diphosphate. H136 contacts dimethylallyl diphosphate. An isopentenyl diphosphate-binding site is contributed by H136. E138 acts as the Proton donor in catalysis. T177 is a binding site for (2E)-4-hydroxy-3-methylbut-2-enyl diphosphate. C207 contributes to the [4Fe-4S] cluster binding site. Residues S235, S236, N237, and S280 each coordinate (2E)-4-hydroxy-3-methylbut-2-enyl diphosphate. Residues S235, S236, N237, and S280 each contribute to the dimethylallyl diphosphate site. Residues S235, S236, N237, and S280 each coordinate isopentenyl diphosphate.

The protein belongs to the IspH family. Requires [4Fe-4S] cluster as cofactor.

It catalyses the reaction isopentenyl diphosphate + 2 oxidized [2Fe-2S]-[ferredoxin] + H2O = (2E)-4-hydroxy-3-methylbut-2-enyl diphosphate + 2 reduced [2Fe-2S]-[ferredoxin] + 2 H(+). The catalysed reaction is dimethylallyl diphosphate + 2 oxidized [2Fe-2S]-[ferredoxin] + H2O = (2E)-4-hydroxy-3-methylbut-2-enyl diphosphate + 2 reduced [2Fe-2S]-[ferredoxin] + 2 H(+). The protein operates within isoprenoid biosynthesis; dimethylallyl diphosphate biosynthesis; dimethylallyl diphosphate from (2E)-4-hydroxy-3-methylbutenyl diphosphate: step 1/1. It participates in isoprenoid biosynthesis; isopentenyl diphosphate biosynthesis via DXP pathway; isopentenyl diphosphate from 1-deoxy-D-xylulose 5-phosphate: step 6/6. Its function is as follows. Catalyzes the conversion of 1-hydroxy-2-methyl-2-(E)-butenyl 4-diphosphate (HMBPP) into a mixture of isopentenyl diphosphate (IPP) and dimethylallyl diphosphate (DMAPP). Acts in the terminal step of the DOXP/MEP pathway for isoprenoid precursor biosynthesis. In Rhizobium rhizogenes (strain K84 / ATCC BAA-868) (Agrobacterium radiobacter), this protein is 4-hydroxy-3-methylbut-2-enyl diphosphate reductase.